The primary structure comprises 210 residues: Proteasome subunit beta (210 aa).

The propeptide at 1–9 is removed in mature form; by autocatalysis; it reads MIHDKVFKG. Catalysis depends on threonine 10, which acts as the Nucleophile.

It belongs to the peptidase T1B family. In terms of assembly, the 20S proteasome core is composed of 14 alpha and 14 beta subunits that assemble into four stacked heptameric rings, resulting in a barrel-shaped structure. The two inner rings, each composed of seven catalytic beta subunits, are sandwiched by two outer rings, each composed of seven alpha subunits. The catalytic chamber with the active sites is on the inside of the barrel. Has a gated structure, the ends of the cylinder being occluded by the N-termini of the alpha-subunits. Is capped at one or both ends by the proteasome regulatory ATPase, PAN.

The protein localises to the cytoplasm. The catalysed reaction is Cleavage of peptide bonds with very broad specificity.. The formation of the proteasomal ATPase PAN-20S proteasome complex, via the docking of the C-termini of PAN into the intersubunit pockets in the alpha-rings, triggers opening of the gate for substrate entry. Interconversion between the open-gate and close-gate conformations leads to a dynamic regulation of the 20S proteasome proteolysis activity. Component of the proteasome core, a large protease complex with broad specificity involved in protein degradation. The chain is Proteasome subunit beta from Ferroglobus placidus (strain DSM 10642 / AEDII12DO).